The chain runs to 393 residues: Cytochrome b (393 aa).

Transmembrane regions (helical) follow at residues 33–53 (FGSL…FLAM), 77–98 (WFLR…YLHM), 113–133 (WNIG…GYVL), and 178–198 (FFAI…LHLL). Heme b contacts are provided by His83 and His97. The heme b site is built by His182 and His196. His201 is a binding site for a ubiquinone. The next 4 membrane-spanning stretches (helical) occupy residues 226–246 (YKDV…ALFA), 288–308 (LGGV…PFIH), 320–340 (LSQL…WIGG), and 347–367 (FIII…ILMP).

This sequence belongs to the cytochrome b family. In terms of assembly, the cytochrome bc1 complex contains 3 respiratory subunits (MT-CYB, CYC1 and UQCRFS1), 2 core proteins (UQCRC1 and UQCRC2) and probably 6 low-molecular weight proteins. The cofactor is heme b.

The protein resides in the mitochondrion inner membrane. Its function is as follows. Component of the ubiquinol-cytochrome c reductase complex (complex III or cytochrome b-c1 complex) that is part of the mitochondrial respiratory chain. The b-c1 complex mediates electron transfer from ubiquinol to cytochrome c. Contributes to the generation of a proton gradient across the mitochondrial membrane that is then used for ATP synthesis. This chain is Cytochrome b (mt-cyb), found in Synbranchus marmoratus (Marbled swamp eel).